Reading from the N-terminus, the 64-residue chain is Bowman-Birk type trypsin inhibitor TI1 (64 aa).

Disulfide bonds link Cys9/Cys61, Cys10/Cys25, Cys15/Cys23, Cys32/Cys39, and Cys36/Cys49.

Belongs to the Bowman-Birk serine protease inhibitor family.

The chain is Bowman-Birk type trypsin inhibitor TI1 from Coix lacryma-jobi (Job's tears).